The primary structure comprises 78 residues: uncharacterized protein (78 aa).

This is an uncharacterized protein from Escherichia coli (Bacteriophage T4).